The primary structure comprises 59 residues: Amyloid-beta precursor protein (59 aa).

At 1-34 the chain is on the extracellular side; that stretch reads ISEVKMDAEFRHDSGYEVHHQKLVFFAEDVGSNK. Residues 35 to 58 form a helical membrane-spanning segment; that stretch reads GAIIGLMVGGVVIATVIVITLVML. Lysine 59 is a topological domain (cytoplasmic).

Belongs to the APP family. In terms of assembly, binds, via its C-terminus, to the PID domain of several cytoplasmic proteins, including APBB family members, the APBA family, MAPK8IP1, SHC1 and NUMB and DAB1. Binding to DAB1 inhibits its serine phosphorylation. Interacts (via NPXY motif) with DAB2 (via PID domain); the interaction is impaired by tyrosine phosphorylation of the NPXY motif. Also interacts with GPCR-like protein BPP, APPBP1, IB1, KNS2 (via its TPR domains), APPBP2 (via BaSS) and DDB1. In vitro, it binds MAPT via the MT-binding domains. Associates with microtubules in the presence of ATP and in a kinesin-dependent manner. Interacts, through a C-terminal domain, with GNAO1. Interacts with CPEB1, ANKS1B and AGER. Interacts with ITM2B. Interacts with ITM2C. Interacts with IDE. Can form homodimers; dimerization is enhanced in the presence of Cu(2+) ions. Can form homodimers; this is promoted by heparin binding. Interacts with SORL1 (via N-terminal ectodomain); this interaction retains APP in the trans-Golgi network and reduces processing into soluble APP-alpha and amyloid-beta peptides. Interacts with PLD3. Interacts with VDAC1. Interacts with NSG1; could regulate APP processing. Amyloid-beta protein 42 interacts with FPR2. Interacts with LRRK2. Interacts (via cytoplasmic domain) with KIF5B. Interacts (via C-terminus) with APBB2/FE65L1 (via C-terminus). Interacts (via intracellular domain) with APBB3. Proteolytically processed under normal cellular conditions. Cleavage either by alpha-secretase, beta-secretase or theta-secretase leads to generation and extracellular release of soluble APP peptides, S-APP-alpha and S-APP-beta, and the retention of corresponding membrane-anchored C-terminal fragments, C80, C83 and C99. Subsequent processing of C80 and C83 by gamma-secretase yields P3 peptides. This is the major secretory pathway and is non-amyloidogenic. Alternatively, presenilin/nicastrin-mediated gamma-secretase processing of C99 releases the amyloid-beta proteins, amyloid-beta protein 40 and amyloid-beta protein 42, major components of amyloid plaques, and the cytotoxic C-terminal fragments, gamma-CTF(50), gamma-CTF(57) and gamma-CTF(59). PSEN1 cleavage is more efficient with C83 than with C99 as substrate (in vitro). Amyloid-beta protein 40 and Amyloid-beta protein 42 are cleaved by ACE. Many other minor amyloid-beta peptides, amyloid-beta 1-X peptides, are found in cerebral spinal fluid (CSF) including the amyloid-beta X-15 peptides, produced from the cleavage by alpha-secretase.

It localises to the cell membrane. The protein localises to the membrane. It is found in the perikaryon. The protein resides in the cell projection. Its subcellular location is the growth cone. It localises to the clathrin-coated pit. The protein localises to the early endosome. It is found in the cytoplasmic vesicle. The protein resides in the secreted. Its subcellular location is the cell surface. It localises to the nucleus. The protein localises to the cytoplasm. Functions as a cell surface receptor and performs physiological functions on the surface of neurons relevant to neurite growth, neuronal adhesion and axonogenesis. Interaction between APP molecules on neighboring cells promotes synaptogenesis. Involved in cell mobility and transcription regulation through protein-protein interactions. Can promote transcription activation through binding to APBB1-KAT5 and inhibit Notch signaling through interaction with Numb. Couples to apoptosis-inducing pathways such as those mediated by G(o) and JIP. Inhibits G(o)-alpha ATPase activity. Acts as a kinesin I membrane receptor, mediating the axonal transport of beta-secretase and presenilin 1. By acting as a kinesin I membrane receptor, plays a role in axonal anterograde transport of cargo towards synapses in axons. May be involved in copper homeostasis/oxidative stress through copper ion reduction. In vitro, copper-metallated APP induces neuronal death directly or is potentiated through Cu(2+)-mediated low-density lipoprotein oxidation. Can regulate neurite outgrowth through binding to components of the extracellular matrix such as heparin and collagen I and IV. Induces a AGER-dependent pathway that involves activation of p38 MAPK, resulting in internalization of amyloid-beta peptide and mitochondrial dysfunction in cultured cortical neurons. Provides Cu(2+) ions for GPC1 which are required for release of nitric oxide (NO) and subsequent degradation of the heparan sulfate chains on GPC1. This chain is Amyloid-beta precursor protein (APP), found in Bos taurus (Bovine).